Reading from the N-terminus, the 242-residue chain is UPF0246 protein SPH_1662 (242 aa).

This sequence belongs to the UPF0246 family.

This is UPF0246 protein SPH_1662 from Streptococcus pneumoniae (strain Hungary19A-6).